The sequence spans 180 residues: ADP-ribosylation factor 4 (180 aa).

Residue G2 is the site of N-myristoyl glycine attachment. GTP is bound by residues 24-31 (GLDAAGKT), 67-71 (DVGGQ), and 126-129 (NKQD). Phosphoserine is present on S147.

Belongs to the small GTPase superfamily. Arf family. As to quaternary structure, forms a complex containing RAB11A, ASAP1, RAB3IP, RAP11FIP3 and ARF4; the complex promotes preciliary trafficking; the complex binds to RHO in photoreceptor cells and promotes RHO ciliary transport.

It localises to the golgi apparatus. It is found in the membrane. GTP-binding protein that functions as an allosteric activator of the cholera toxin catalytic subunit, an ADP-ribosyltransferase. Involved in protein trafficking; may modulate vesicle budding and uncoating within the Golgi apparatus. Part of the ciliary targeting complex containing Rab11, ASAP1, Rabin8/RAB3IP, RAB11FIP3 and ARF4, which direct preciliary vesicle trafficking to mother centriole and ciliogenesis initiation. This chain is ADP-ribosylation factor 4 (ARF4), found in Bos taurus (Bovine).